A 234-amino-acid chain; its full sequence is Orotate phosphoribosyltransferase (234 aa).

Lysine 30 contacts 5-phospho-alpha-D-ribose 1-diphosphate. Residue 38–39 (FF) coordinates orotate. Residues 80-81 (YK), arginine 110, lysine 111, lysine 114, histidine 116, and 136-144 (DDVITAGTA) each bind 5-phospho-alpha-D-ribose 1-diphosphate. 2 residues coordinate orotate: threonine 140 and arginine 168.

It belongs to the purine/pyrimidine phosphoribosyltransferase family. PyrE subfamily. As to quaternary structure, homodimer.

The enzyme catalyses orotidine 5'-phosphate + diphosphate = orotate + 5-phospho-alpha-D-ribose 1-diphosphate. It participates in pyrimidine metabolism; UMP biosynthesis via de novo pathway; UMP from orotate: step 1/2. In terms of biological role, catalyzes the transfer of a ribosyl phosphate group from 5-phosphoribose 1-diphosphate to orotate, leading to the formation of orotidine monophosphate (OMP). The sequence is that of Orotate phosphoribosyltransferase (URA5) from Metarhizium anisopliae (Entomophthora anisopliae).